The following is a 599-amino-acid chain: Proteasome-associated ATPase (599 aa).

The disordered stretch occupies residues 1 to 22; it reads MPHGHPGSQPDEGGELSNGSSS. The stretch at 21 to 97 forms a coiled coil; sequence SSGELTAQIR…LREEVDRLAQ (77 aa). 286 to 291 contacts ATP; sequence GCGKTL. The segment at 598–599 is docks into pockets in the proteasome alpha-ring; it reads YL.

This sequence belongs to the AAA ATPase family. As to quaternary structure, homohexamer. Assembles into a hexameric ring structure that caps the 20S proteasome core. Strongly interacts with the prokaryotic ubiquitin-like protein Pup through a hydrophobic interface; the interacting region of ARC lies in its N-terminal coiled-coil domain. There is one Pup binding site per ARC hexamer ring. Upon ATP-binding, the C-terminus of ARC interacts with the alpha-rings of the proteasome core, possibly by binding to the intersubunit pockets.

It participates in protein degradation; proteasomal Pup-dependent pathway. In terms of biological role, ATPase which is responsible for recognizing, binding, unfolding and translocation of pupylated proteins into the bacterial 20S proteasome core particle. May be essential for opening the gate of the 20S proteasome via an interaction with its C-terminus, thereby allowing substrate entry and access to the site of proteolysis. Thus, the C-termini of the proteasomal ATPase may function like a 'key in a lock' to induce gate opening and therefore regulate proteolysis. The chain is Proteasome-associated ATPase from Actinosynnema mirum (strain ATCC 29888 / DSM 43827 / JCM 3225 / NBRC 14064 / NCIMB 13271 / NRRL B-12336 / IMRU 3971 / 101).